The primary structure comprises 315 residues: Glycine--tRNA ligase alpha subunit (315 aa).

This sequence belongs to the class-II aminoacyl-tRNA synthetase family. As to quaternary structure, tetramer of two alpha and two beta subunits.

It localises to the cytoplasm. The catalysed reaction is tRNA(Gly) + glycine + ATP = glycyl-tRNA(Gly) + AMP + diphosphate. The chain is Glycine--tRNA ligase alpha subunit from Pseudomonas putida (strain ATCC 47054 / DSM 6125 / CFBP 8728 / NCIMB 11950 / KT2440).